The chain runs to 142 residues: Probable inactive dual specificity protein phosphatase-like At4g18593 (142 aa).

The protein belongs to the protein-tyrosine phosphatase family. Non-receptor class dual specificity subfamily.

The protein is Probable inactive dual specificity protein phosphatase-like At4g18593 of Arabidopsis thaliana (Mouse-ear cress).